Reading from the N-terminus, the 256-residue chain is 2-C-methyl-D-erythritol 4-phosphate cytidylyltransferase (256 aa).

This sequence belongs to the IspD/TarI cytidylyltransferase family. IspD subfamily.

The catalysed reaction is 2-C-methyl-D-erythritol 4-phosphate + CTP + H(+) = 4-CDP-2-C-methyl-D-erythritol + diphosphate. The protein operates within isoprenoid biosynthesis; isopentenyl diphosphate biosynthesis via DXP pathway; isopentenyl diphosphate from 1-deoxy-D-xylulose 5-phosphate: step 2/6. Functionally, catalyzes the formation of 4-diphosphocytidyl-2-C-methyl-D-erythritol from CTP and 2-C-methyl-D-erythritol 4-phosphate (MEP). In Corynebacterium glutamicum (strain ATCC 13032 / DSM 20300 / JCM 1318 / BCRC 11384 / CCUG 27702 / LMG 3730 / NBRC 12168 / NCIMB 10025 / NRRL B-2784 / 534), this protein is 2-C-methyl-D-erythritol 4-phosphate cytidylyltransferase.